A 254-amino-acid chain; its full sequence is Thiazole synthase (254 aa).

Lys95 acts as the Schiff-base intermediate with DXP in catalysis. 1-deoxy-D-xylulose 5-phosphate is bound by residues Gly156, 182–183, and 204–205; these read AG and NT.

This sequence belongs to the ThiG family. As to quaternary structure, homotetramer. Forms heterodimers with either ThiH or ThiS.

It is found in the cytoplasm. The enzyme catalyses [ThiS sulfur-carrier protein]-C-terminal-Gly-aminoethanethioate + 2-iminoacetate + 1-deoxy-D-xylulose 5-phosphate = [ThiS sulfur-carrier protein]-C-terminal Gly-Gly + 2-[(2R,5Z)-2-carboxy-4-methylthiazol-5(2H)-ylidene]ethyl phosphate + 2 H2O + H(+). It functions in the pathway cofactor biosynthesis; thiamine diphosphate biosynthesis. Functionally, catalyzes the rearrangement of 1-deoxy-D-xylulose 5-phosphate (DXP) to produce the thiazole phosphate moiety of thiamine. Sulfur is provided by the thiocarboxylate moiety of the carrier protein ThiS. In vitro, sulfur can be provided by H(2)S. The sequence is that of Thiazole synthase from Shewanella baltica (strain OS223).